Reading from the N-terminus, the 179-residue chain is Large ribosomal subunit protein uL5 (179 aa).

The protein belongs to the universal ribosomal protein uL5 family. As to quaternary structure, part of the 50S ribosomal subunit; part of the 5S rRNA/L5/L18/L25 subcomplex. Contacts the 5S rRNA and the P site tRNA. Forms a bridge to the 30S subunit in the 70S ribosome.

Its function is as follows. This is one of the proteins that bind and probably mediate the attachment of the 5S RNA into the large ribosomal subunit, where it forms part of the central protuberance. In the 70S ribosome it contacts protein S13 of the 30S subunit (bridge B1b), connecting the 2 subunits; this bridge is implicated in subunit movement. Contacts the P site tRNA; the 5S rRNA and some of its associated proteins might help stabilize positioning of ribosome-bound tRNAs. The chain is Large ribosomal subunit protein uL5 from Shewanella loihica (strain ATCC BAA-1088 / PV-4).